The sequence spans 345 residues: NADH-quinone oxidoreductase subunit H (345 aa).

Transmembrane regions (helical) follow at residues 9–29, 82–102, 108–128, 154–174, 183–203, 241–261, 282–302, and 325–345; these read ALGA…LVFA, VVMV…EGVV, VGVI…TLAG, MGLA…MEIV, LLGW…VTAF, YVNW…GYLV, LLQF…FIWV, and IALA…AVGL.

The protein belongs to the complex I subunit 1 family. In terms of assembly, NDH-1 is composed of 14 different subunits. Subunits NuoA, H, J, K, L, M, N constitute the membrane sector of the complex.

It localises to the cell inner membrane. It catalyses the reaction a quinone + NADH + 5 H(+)(in) = a quinol + NAD(+) + 4 H(+)(out). Its function is as follows. NDH-1 shuttles electrons from NADH, via FMN and iron-sulfur (Fe-S) centers, to quinones in the respiratory chain. The immediate electron acceptor for the enzyme in this species is believed to be ubiquinone. Couples the redox reaction to proton translocation (for every two electrons transferred, four hydrogen ions are translocated across the cytoplasmic membrane), and thus conserves the redox energy in a proton gradient. This subunit may bind ubiquinone. This chain is NADH-quinone oxidoreductase subunit H, found in Salinibacter ruber (strain DSM 13855 / M31).